Consider the following 615-residue polypeptide: Envelope glycoprotein (615 aa).

A signal peptide spans 1–84 (MPKRRAGFRK…VQNGAAAAFW (84 aa)). Topologically, residues 85-378 (AYIPDPPMIQ…INTALSRPKR (294 aa)) are extracellular. N-linked (GlcNAc...) asparagine; by host glycans are attached at residues N108, N127, N178, N219, N275, and N319. Residues 379–402 (GLSLIILGIVSLITLIATAVTACV) form a helical membrane-spanning segment. Residues 403 to 615 (SLAQSIQAAH…KERGAAGDDP (213 aa)) are Cytoplasmic-facing. Coiled coils occupy residues 411 to 461 (AHTV…FRMK) and 495 to 531 (IWFN…TVDN). A required for cell transformation region spans residues 590-593 (YRTM).

As to quaternary structure, interacts with sheep HYAL2 receptor.

It is found in the virion membrane. Its function is as follows. The envelope proteins induce cell transformation leading to ovine pulmonary adenocarcinoma (OPA), a contagious lung cancer of sheep and goat. They bind to the HYAL2 receptor for cell entry. Env proteins probably do not act as oncogenes by themselves, but may rather liberate an oncogenic factor that would normally be negatively regulated. One mechanism of transformation seems to involve activation of the phosphoinositide-3-OH kinase (PI3K)/Akt pathway but does not involve the virus receptor HYAL2, and the other seems to involve Env binding to HYAL2, HYAL2 degradation, and activation of the MST1R receptor tyrosine kinase, which is normally suppressed by HYAL2. The protein is Envelope glycoprotein (env) of Ovis aries (Sheep).